A 283-amino-acid polypeptide reads, in one-letter code: V-set domain containing T-cell activation inhibitor 1 (283 aa).

Residues 1 to 24 form the signal peptide; it reads MASLGQIIFWSIINIIIILAGAIA. Ig-like V-type domains are found at residues 35-144 and 153-241; these read HFIT…ANLE and PEIN…IKVT. 2 disulfides stabilise this stretch: cysteine 56-cysteine 130 and cysteine 168-cysteine 225. N-linked (GlcNAc...) asparagine glycosylation is present at asparagine 216. Glycine 257 carries GPI-anchor amidated glycine lipidation. The propeptide at 258–283 is removed in mature form; it reads PSPCVFSSAFVAGWALLSLSCCLMLR.

Belongs to the immunoglobulin superfamily. BTN/MOG family. N-glycosylated. Expressed on the surface of professional antigen-presenting cells (at protein level). Widely expressed, including in kidney, liver, lung, pancreas, placenta, prostate, spleen, testis and thymus.

It is found in the cell membrane. In terms of biological role, negatively regulates T-cell-mediated immune response by inhibiting T-cell activation, proliferation, cytokine production and development of cytotoxicity. When expressed on the cell surface of tumor macrophages, plays an important role, together with regulatory T-cells (Treg), in the suppression of tumor-associated antigen-specific T-cell immunity. Involved in promoting epithelial cell transformation. This chain is V-set domain containing T-cell activation inhibitor 1, found in Mus musculus (Mouse).